Here is a 435-residue protein sequence, read N- to C-terminus: Ribulose bisphosphate carboxylase large chain (435 aa).

Substrate is bound by residues asparagine 104 and threonine 154. Lysine 156 (proton acceptor) is an active-site residue. Lysine 158 serves as a coordination point for substrate. 3 residues coordinate Mg(2+): lysine 182, aspartate 184, and glutamate 185. Lysine 182 carries the N6-carboxylysine modification. Histidine 275 serves as the catalytic Proton acceptor. 3 residues coordinate substrate: arginine 276, histidine 308, and serine 360.

The protein belongs to the RuBisCO large chain family. Type I subfamily. Heterohexadecamer of 8 large chains and 8 small chains. Mg(2+) is required as a cofactor.

The protein resides in the plastid. It is found in the chloroplast. The catalysed reaction is 2 (2R)-3-phosphoglycerate + 2 H(+) = D-ribulose 1,5-bisphosphate + CO2 + H2O. It catalyses the reaction D-ribulose 1,5-bisphosphate + O2 = 2-phosphoglycolate + (2R)-3-phosphoglycerate + 2 H(+). Its function is as follows. RuBisCO catalyzes two reactions: the carboxylation of D-ribulose 1,5-bisphosphate, the primary event in carbon dioxide fixation, as well as the oxidative fragmentation of the pentose substrate in the photorespiration process. Both reactions occur simultaneously and in competition at the same active site. This Euglena pisciformis protein is Ribulose bisphosphate carboxylase large chain.